The following is a 63-amino-acid chain: Transmembrane protein 033R (63 aa).

The sequence is that of Transmembrane protein 033R from Dryophytes versicolor (chameleon treefrog).